Here is a 223-residue protein sequence, read N- to C-terminus: MTGTPGAVATRDGEAPERSPPCSPSYDLTGKVMLLGDTGVGKTCFLIQFKDGAFLSGTFIATVGIDFRNKVVTVDGVRVKLQIWDTAGQERFRSVTHAYYRDAQALLLLYDITNKSSFDNIRAWLTEIHEYAQRDVVIMLLGNKADMSSERVIRSEDGETLAREYGVPFLETSAKTGMNVELAFLAIAKELKYRAGHQADEPSFQIRDYVESQKKRSSCCSFM.

Residues 1–23 (MTGTPGAVATRDGEAPERSPPCS) are disordered. Position 2 is an N-acetylthreonine (T2). T38, G39, V40, G41, K42, T43, C44, and T62 together coordinate GTP. A Mg(2+)-binding site is contributed by T43. 2 short sequence motifs (switch) span residues 52–67 (GAFLSGTFIATVGIDF) and 85–102 (DTAGQERFRSVTHAYYRD). Mg(2+) contacts are provided by T62 and D85. GTP contacts are provided by G88, N143, K144, D146, M147, S173, A174, and K175. Residues C219 and C220 are each lipidated (S-geranylgeranyl cysteine). C220 carries the cysteine methyl ester modification. Positions 221–223 (SFM) are cleaved as a propeptide — removed in mature form.

Belongs to the small GTPase superfamily. Rab family. Interacts with RIMS1. Interacts (in GDP-bound form) with RPGR, RPGR functions as guanine exchange factor (GEF). Mg(2+) is required as a cofactor.

It is found in the cytoplasmic vesicle. The protein resides in the cell projection. The protein localises to the cilium. It catalyses the reaction GTP + H2O = GDP + phosphate + H(+). Its activity is regulated as follows. Regulated by guanine nucleotide exchange factors (GEFs) including RPGR which promote the exchange of bound GDP for free GTP. Regulated by GTPase activating proteins (GAPs) which increase the GTP hydrolysis activity. Inhibited by GDP dissociation inhibitors (GDIs). In terms of biological role, the small GTPases Rab are key regulators of intracellular membrane trafficking, from the formation of transport vesicles to their fusion with membranes. Rabs cycle between an inactive GDP-bound form and an active GTP-bound form that is able to recruit to membranes different sets of downstream effectors directly responsible for vesicle formation, movement, tethering and fusion. Acts as an organizer for autophagosome biogenesis in a GTP-dependent manner. Involved in retinal homeostasis by autophagy regulation. This Homo sapiens (Human) protein is Ras-related protein Rab-37.